The following is a 1145-amino-acid chain: DNA polymerase subunit gamma-1, mitochondrial (1145 aa).

Residues 1-9 (MQFHLIRKY) constitute a mitochondrion transit peptide.

Belongs to the DNA polymerase type-A family. Component of the DNA polymerase gamma complex consisting of two subunits: the catalytic subunit DNApol-gamma/DNApolG1 and the accessory subunit PolG2/DNApol-gamma35. Requires Mg(2+) as cofactor.

Its subcellular location is the mitochondrion. The catalysed reaction is DNA(n) + a 2'-deoxyribonucleoside 5'-triphosphate = DNA(n+1) + diphosphate. Its activity is regulated as follows. Stimulated by KCl, and inhibited by the small molecules o 2',3'-dideoxythymidine 5'-triphosphate (d2TTP) and N-ethylmaleimide (NEM). As the catalytic component of the DNA polymerase gamma complex is involved in the replication of mitochondrial DNA (mtDNA). Has both 5'-3' DNA polymerase and a highly mispair-specific 3'-5' exonuclease activity. At the end of mtDNA replication DNA ends are ligated to produce a closed circular mtDNA molecule, its exonuclease activity is required for formation of these ligatable ends by preventing DNA synthesis from continuing past the 5'-end of downstream DNA into duplex DNA regions. Does not possess DNA primase activity, does not catalyze strand displacement synthesis and does not contain a 5'-3' exonuclease activity to catalyze nick translation. Important for promoting the elimination of paternal mitochondrial DNA during spermatogenesis, however its exact role in this function has not yet been identified and appears to be independent of its 3'-5'-exonuclease activity and only partially dependent on its DNA polymerase activity. This is DNA polymerase subunit gamma-1, mitochondrial from Drosophila melanogaster (Fruit fly).